Here is a 2266-residue protein sequence, read N- to C-terminus: Little elongation complex subunit 1 (2266 aa).

Residues 23–186 (CASLQQNLNE…KQKNEKELRH (164 aa)) are a coiled coil. Disordered regions lie at residues 223–259 (GEGS…PLRT) and 517–540 (PAQE…KRPL). Residues 250-259 (PPTQGSPLRT) show a composition bias toward polar residues. Phosphoserine occurs at positions 255, 533, 558, and 589. Residues 591 to 623 (ELEKEKEDTQGFTLGESPESEDDDSGDGMDVAG) are disordered. Positions 608-617 (PESEDDDSGD) are enriched in acidic residues. The residue at position 707 (S707) is a Phosphoserine. Position 832 is a phosphothreonine (T832). A Phosphoserine modification is found at S925. Residues 925–955 (SPEVSASRRKLDFNSPGGSSPVENSDCSTNS) form a disordered region. The segment covering 940–955 (PGGSSPVENSDCSTNS) has biased composition (polar residues). S958 carries the phosphoserine modification. Disordered stretches follow at residues 977–1001 (VQGD…HGSE) and 1107–1133 (TEVE…QKNL). A compositionally biased stretch (polar residues) spans 984–998 (QRQPQATDLDSSGTH). Residue K1218 is modified to N6-acetyllysine. 3 disordered regions span residues 1295–1372 (TTEN…PSAL), 1467–1510 (AEKS…KSRL), and 1543–1707 (NSKL…SASE). 5 stretches are compositionally biased toward polar residues: residues 1306-1319 (RETT…SEPT), 1328-1344 (EGSS…NPQS), 1487-1505 (NNLS…STNF), 1565-1588 (NKPV…QSFS), and 1594-1605 (TKTQRSQTQTIL). A Phosphoserine modification is found at S1588. Low complexity-rich tracts occupy residues 1609-1620 (DTSTPTDCSPDT) and 1637-1671 (APLI…QVSP). S1617 bears the Phosphoserine mark. Phosphothreonine is present on T1642. Phosphoserine occurs at positions 1692, 1697, 1699, 1701, 1712, 1838, and 1854. The tract at residues 1809-1902 (TGSSSGGDCN…AVSAVSQLPL (94 aa)) is disordered. Polar residues predominate over residues 1825–1843 (LGTQQDSSGKRTLSTSTLR). Over residues 1889–1901 (CSSPAVSAVSQLP) the composition is skewed to polar residues. S1903 carries the phosphoserine modification.

Belongs to the ICE1 family. In terms of assembly, component of the little elongation complex (LEC), at least composed of ELL (ELL, ELL2 or ELL3), ZC3H8, ICE1 and ICE2. Interacts (via N-terminus domain) with ELL. Interacts (via C-terminus domain) with ICE2 and ZC3H8.

The protein resides in the nucleus. The protein localises to the cajal body. Component of the little elongation complex (LEC), a complex required to regulate small nuclear RNA (snRNA) gene transcription by RNA polymerase II and III. Specifically acts as a scaffold protein that promotes the LEC complex formation and recruitment and RNA polymerase II occupancy at snRNA genes in subnuclear bodies. This Homo sapiens (Human) protein is Little elongation complex subunit 1 (ICE1).